The sequence spans 165 residues: S-ribosylhomocysteine lyase (165 aa).

3 residues coordinate Fe cation: H54, H58, and C128.

The protein belongs to the LuxS family. Homodimer. Requires Fe cation as cofactor.

The catalysed reaction is S-(5-deoxy-D-ribos-5-yl)-L-homocysteine = (S)-4,5-dihydroxypentane-2,3-dione + L-homocysteine. Functionally, involved in the synthesis of autoinducer 2 (AI-2) which is secreted by bacteria and is used to communicate both the cell density and the metabolic potential of the environment. The regulation of gene expression in response to changes in cell density is called quorum sensing. Catalyzes the transformation of S-ribosylhomocysteine (RHC) to homocysteine (HC) and 4,5-dihydroxy-2,3-pentadione (DPD). In Helicobacter hepaticus (strain ATCC 51449 / 3B1), this protein is S-ribosylhomocysteine lyase.